A 320-amino-acid polypeptide reads, in one-letter code: Pyrroline-5-carboxylate reductase 2 (320 aa).

Position 2 is an N-acetylserine (serine 2). NADP(+) contacts are provided by residues 6–11 (IGAGQL) and serine 34. NADPH is bound by residues alanine 8, glutamine 10, leucine 11, serine 34, glutamate 36, asparagine 56, valine 70, lysine 71, and alanine 97. NADP(+) contacts are provided by residues asparagine 56, 69–72 (AVKP), and 95–97 (CAA). Glutamate 164 is a binding site for L-proline. Asparagine 230 provides a ligand contact to NADPH. Positions 237 and 238 each coordinate L-proline. The span at 295–305 (PTVSTLTPSSP) shows a compositional bias: low complexity. Residues 295–320 (PTVSTLTPSSPGKLLTRSLALGGKKD) are disordered. A Phosphoserine modification is found at serine 304.

This sequence belongs to the pyrroline-5-carboxylate reductase family. As to quaternary structure, homodecamer; composed of 5 homodimers. Interacts with LTO1. Detected in erythrocytes (at protein level). Expressed in fetal brain.

It localises to the cytoplasm. The protein resides in the mitochondrion. It catalyses the reaction L-proline + NADP(+) = (S)-1-pyrroline-5-carboxylate + NADPH + 2 H(+). The enzyme catalyses L-proline + NAD(+) = (S)-1-pyrroline-5-carboxylate + NADH + 2 H(+). It functions in the pathway amino-acid biosynthesis; L-proline biosynthesis; L-proline from L-glutamate 5-semialdehyde: step 1/1. With respect to regulation, subject to competitive inhibition by NADP. Was reported not to be inhibited by proline. However other study demonstrated an inhibition by proline. In terms of biological role, oxidoreductase that catalyzes the last step in proline biosynthesis, which corresponds to the reduction of pyrroline-5-carboxylate to L-proline using NAD(P)H. At physiologic concentrations, has higher specific activity in the presence of NADH. Involved in cellular response to oxidative stress. In some cell types, such as erythrocytes, its primary function may be the generation of NADP(+). This Homo sapiens (Human) protein is Pyrroline-5-carboxylate reductase 2.